Consider the following 476-residue polypeptide: MIEDKRLTDTELEAITDRITGDWVSRAAVDFADAVAFHESLPPHKRFAAVLENAEAVLCQPRAGVPRLDEHVELLQHLDEEGGADLLPTTIDSYTRDNAYEKAAEGLARSRETDSSELNGFPAVNHGVEGCREVVRRVDAPVQVRHGTPDARLLAAVTLAGGFQSFEGGPITYNLPYTSAYDLETTIEYWQYVDRLCGAYTERGVTINREPFGPLTGTLVPPSIAIAIVTIEGLLAATQGVRSVTLGYGQVGNLVQDVAAVRAMAAIGAEYLPDSVTVTTVLHQWMGGFPRDEARAHGVIGLAGATAALVEPTKVITKSPQEAVGVPTAESNAAGLRTTDQVLRMLDEQSITLDGVDREQALIERSVRSLLDAVYEAGDGDIARGTVRAFDAGTLDIPFPPSDAAAGDVLPARDDDGRVRLLKFGAVALDDETKRIHRARLDRRADTEGRELSFRMVADDVSAVSDGRLIGRPGDD.

Residue arginine 62 coordinates L-glutamate. Glycine 64 is an adenosylcob(III)alamin binding site. Arginine 96 is an L-glutamate binding site. Asparagine 119 is a binding site for adenosylcob(III)alamin. Residues 145 to 146 (RH), glutamate 167, and tyrosine 173 each bind L-glutamate. An adenosylcob(III)alamin-binding site is contributed by proline 176. L-glutamate is bound at residue tyrosine 177. Phenylalanine 289, lysine 318, and glutamate 322 together coordinate adenosylcob(III)alamin.

The protein belongs to the methylaspartate mutase GlmE subunit family. As to quaternary structure, heterotetramer composed of 2 epsilon subunits (GlmE) and 2 sigma subunits (GlmS). GlmE exists as a homodimer and GlmS as a monomer. Adenosylcob(III)alamin serves as cofactor.

The enzyme catalyses (2S,3S)-3-methyl-L-aspartate = L-glutamate. It participates in amino-acid degradation; L-glutamate degradation via mesaconate pathway; acetate and pyruvate from L-glutamate: step 1/4. Its function is as follows. Catalyzes the carbon skeleton rearrangement of L-glutamate to L-threo-3-methylaspartate ((2S,3S)-3-methylaspartate). This chain is Glutamate mutase epsilon subunit, found in Halobacterium salinarum (strain ATCC 700922 / JCM 11081 / NRC-1) (Halobacterium halobium).